The sequence spans 494 residues: Caspase-8 (494 aa).

A propeptide spanning residues 1–242 (MAGSNLLIHL…QEIESDNQQS (242 aa)) is cleaved from the precursor. Active-site residues include His-345 and Cys-386. Positions 401-410 (RIDVTTVSPD) are excised as a propeptide.

It belongs to the peptidase C14A family. Heterotetramer that consists of two anti-parallel arranged heterodimers, each one formed by a 15 kDa (caspase-8 subunit p15) and a 10 kDa (caspase-8 subunit p10) subunit. Interacts (via N-terminus) with Diap2; likely to bind Diap2 simultaneously with Fadd to form a trimeric complex. Interacts with Dark (via N-terminus). Post-translationally, polyubiquitinated by Diap2 following activation of the immune deficiency (Imd) pathway. As to expression, constitutively expressed in fat bodies of larvae and adults.

The protein resides in the cytoplasm. The enzyme catalyses Strict requirement for Asp at position P1 and has a preferred cleavage sequence of (Leu/Asp/Val)-Glu-Thr-Asp-|-(Gly/Ser/Ala).. Functionally, effector of the programmed cell death (PCD) activators rpr, grim and hid. May play an apoptotic role in the germline as well as soma. Fadd interacts with Dredd to promote cleavage of Dredd and is necessary and sufficient for enhancing Dredd-induced apoptosis. Plays a role in the innate immune response. Required for resistance to Gram-negative bacterial infection. Diap2-mediated ubiquitination of Dredd is critical for processing of imd and rel and the subsequent expression of antimicrobial genes such as DptA. The chain is Caspase-8 from Drosophila melanogaster (Fruit fly).